The primary structure comprises 248 residues: Ubiquinone/menaquinone biosynthesis C-methyltransferase UbiE (248 aa).

Residues serine 68 and aspartate 92 each contribute to the S-adenosyl-L-methionine site.

The protein belongs to the class I-like SAM-binding methyltransferase superfamily. MenG/UbiE family.

The catalysed reaction is a 2-demethylmenaquinol + S-adenosyl-L-methionine = a menaquinol + S-adenosyl-L-homocysteine + H(+). It catalyses the reaction a 2-methoxy-6-(all-trans-polyprenyl)benzene-1,4-diol + S-adenosyl-L-methionine = a 5-methoxy-2-methyl-3-(all-trans-polyprenyl)benzene-1,4-diol + S-adenosyl-L-homocysteine + H(+). It participates in quinol/quinone metabolism; menaquinone biosynthesis; menaquinol from 1,4-dihydroxy-2-naphthoate: step 2/2. Its pathway is cofactor biosynthesis; ubiquinone biosynthesis. Methyltransferase required for the conversion of demethylmenaquinol (DMKH2) to menaquinol (MKH2) and the conversion of 2-polyprenyl-6-methoxy-1,4-benzoquinol (DDMQH2) to 2-polyprenyl-3-methyl-6-methoxy-1,4-benzoquinol (DMQH2). This is Ubiquinone/menaquinone biosynthesis C-methyltransferase UbiE from Rickettsia peacockii (strain Rustic).